We begin with the raw amino-acid sequence, 105 residues long: Small ribosomal subunit protein uS10 (105 aa).

Belongs to the universal ribosomal protein uS10 family. As to quaternary structure, part of the 30S ribosomal subunit.

Involved in the binding of tRNA to the ribosomes. The chain is Small ribosomal subunit protein uS10 from Synechococcus sp. (strain JA-2-3B'a(2-13)) (Cyanobacteria bacterium Yellowstone B-Prime).